We begin with the raw amino-acid sequence, 213 residues long: Cytochrome b6 (213 aa).

Residues 30–50 form a helical membrane-spanning segment; that stretch reads IFYCLGGLTLLAFLVQCVTGL. Heme c is bound at residue cysteine 33. Residues histidine 84 and histidine 98 each contribute to the heme b site. 3 consecutive transmembrane segments (helical) span residues 88–108, 114–134, and 184–204; these read ANLM…TGSF, LNWL…FTGY, and LHVM…FIMI. Histidine 185 and histidine 200 together coordinate heme b.

It belongs to the cytochrome b family. PetB subfamily. In terms of assembly, the subunits of the cytochrome bc complex are a Rieske Fe-S protein (PetC), cytochrome b6 (PetB), subunit IV (PetD), and a diheme cytochrome c (PetX). It depends on heme b as a cofactor. Heme c is required as a cofactor.

The protein resides in the cell membrane. In terms of biological role, component of the cytochrome bc complex which donates electrons to the photosynthetic reaction center. This is Cytochrome b6 from Heliobacterium mobile (Heliobacillus mobilis).